Reading from the N-terminus, the 303-residue chain is MTWHILGAGSLGSLWAARLGRAGLPVRLILRDRQRLRRYQQAGGLSLVEDGQASLYPIAAETPDGGQPIQRLLLACKAYDAEEAASSVAHRLAGNAELLLLQNGLGSQQAVAARLPRSRCLFASSTEGAFRDGDFRVVFAGRGHTWLGDPRDTNAPAWLTQLSQAGIPHSWSDDILERLWRKLALNCAINPLTVLHDCRNGGLRQHPEEIAALCDELGQLLHASGYDAAARSLLEDVRAVIDATAANYSSMHQDVTRGRRTEIGYLLGYACQHGQRLGLPLPRLGTLLARLQAHLRQRGLPDR.

Residues 7–12, Arg-35, Asn-103, Ala-129, and Arg-131 contribute to the NADP(+) site; that span reads GAGSLG. Asn-103 lines the substrate pocket. Catalysis depends on Lys-182, which acts as the Proton donor. Asn-186, Asn-190, Asn-200, and Ser-250 together coordinate substrate. Glu-262 is an NADP(+) binding site.

This sequence belongs to the ketopantoate reductase family.

Its subcellular location is the cytoplasm. The enzyme catalyses (R)-pantoate + NADP(+) = 2-dehydropantoate + NADPH + H(+). It participates in cofactor biosynthesis; (R)-pantothenate biosynthesis; (R)-pantoate from 3-methyl-2-oxobutanoate: step 2/2. Its function is as follows. Catalyzes the NADPH-dependent reduction of ketopantoate into pantoic acid. This Pseudomonas aeruginosa (strain ATCC 15692 / DSM 22644 / CIP 104116 / JCM 14847 / LMG 12228 / 1C / PRS 101 / PAO1) protein is 2-dehydropantoate 2-reductase (panE).